A 268-amino-acid chain; its full sequence is Ribosomal RNA small subunit methyltransferase A (268 aa).

S-adenosyl-L-methionine-binding residues include Asn19, Leu21, Gly46, Glu67, Asp92, and Asn113.

The protein belongs to the class I-like SAM-binding methyltransferase superfamily. rRNA adenine N(6)-methyltransferase family. RsmA subfamily.

The protein localises to the cytoplasm. It catalyses the reaction adenosine(1518)/adenosine(1519) in 16S rRNA + 4 S-adenosyl-L-methionine = N(6)-dimethyladenosine(1518)/N(6)-dimethyladenosine(1519) in 16S rRNA + 4 S-adenosyl-L-homocysteine + 4 H(+). In terms of biological role, specifically dimethylates two adjacent adenosines (A1518 and A1519) in the loop of a conserved hairpin near the 3'-end of 16S rRNA in the 30S particle. May play a critical role in biogenesis of 30S subunits. This is Ribosomal RNA small subunit methyltransferase A from Tolumonas auensis (strain DSM 9187 / NBRC 110442 / TA 4).